Here is a 91-residue protein sequence, read N- to C-terminus: Cytochrome b-c1 complex subunit 6, mitochondrial (91 aa).

The span at 1–10 (MGLEDERKML) shows a compositional bias: basic and acidic residues. The transit peptide at 1-13 (MGLEDERKMLTES) directs the protein to the mitochondrion. Residues 1–30 (MGLEDERKMLTESGDPEKEEEEEEELVDPL) are disordered. The segment covering 17–27 (EKEEEEEEELV) has biased composition (acidic residues). 2 disulfides stabilise this stretch: cysteine 37-cysteine 81 and cysteine 53-cysteine 67. At lysine 42 the chain carries N6-acetyllysine. Lysine 85 is modified (N6-acetyllysine).

It belongs to the UQCRH/QCR6 family. In terms of assembly, component of the ubiquinol-cytochrome c oxidoreductase (cytochrome b-c1 complex, complex III, CIII), a multisubunit enzyme composed of 11 subunits. The complex is composed of 3 respiratory subunits cytochrome b, cytochrome c1 and Rieske protein UQCRFS1, 2 core protein subunits UQCRC1/QCR1 and UQCRC2/QCR2, and 6 low-molecular weight protein subunits UQCRH/QCR6, UQCRB/QCR7, UQCRQ/QCR8, UQCR10/QCR9, UQCR11/QCR10 and subunit 9, the cleavage product of Rieske protein UQCRFS1. The complex exists as an obligatory dimer and forms supercomplexes (SCs) in the inner mitochondrial membrane with NADH-ubiquinone oxidoreductase (complex I, CI) and cytochrome c oxidase (complex IV, CIV), resulting in different assemblies (supercomplex SCI(1)III(2)IV(1) and megacomplex MCI(2)III(2)IV(2)).

It is found in the mitochondrion inner membrane. Its function is as follows. Component of the ubiquinol-cytochrome c oxidoreductase, a multisubunit transmembrane complex that is part of the mitochondrial electron transport chain which drives oxidative phosphorylation. The respiratory chain contains 3 multisubunit complexes succinate dehydrogenase (complex II, CII), ubiquinol-cytochrome c oxidoreductase (cytochrome b-c1 complex, complex III, CIII) and cytochrome c oxidase (complex IV, CIV), that cooperate to transfer electrons derived from NADH and succinate to molecular oxygen, creating an electrochemical gradient over the inner membrane that drives transmembrane transport and the ATP synthase. The cytochrome b-c1 complex catalyzes electron transfer from ubiquinol to cytochrome c, linking this redox reaction to translocation of protons across the mitochondrial inner membrane, with protons being carried across the membrane as hydrogens on the quinol. In the process called Q cycle, 2 protons are consumed from the matrix, 4 protons are released into the intermembrane space and 2 electrons are passed to cytochrome c. This Macaca fascicularis (Crab-eating macaque) protein is Cytochrome b-c1 complex subunit 6, mitochondrial (UQCRH).